The primary structure comprises 114 residues: MAVIQFIKGINETVVADVSLTRSRDGSKGTATFRFNNPDILKSGMEDKGDITGMYLKDDEGELMTRDVSAKFINGKPQAVEAIYIIKSPQEWDRFMRFMEKYANENKLSFTKAK.

This sequence belongs to the Psb28 family. In terms of assembly, part of the photosystem II complex.

Its subcellular location is the plastid. The protein localises to the chloroplast thylakoid membrane. The protein is Photosystem II reaction center Psb28 protein of Gracilaria tenuistipitata var. liui (Red alga).